The chain runs to 100 residues: MEASGSAGNDRVRNLQSEVEGVKNIMTQNVERILARGENLDHLRNKTEDLEATSEHFKTTSQKVARKFWWKNVKMIVIICVIVLIILILIILFATGTIPT.

Topologically, residues 1 to 74 are cytoplasmic; the sequence is MEASGSAGND…ARKFWWKNVK (74 aa). A phosphoserine mark is found at serine 4 and serine 17. A v-SNARE coiled-coil homology domain is found at 11–71; the sequence is RVRNLQSEVE…QKVARKFWWK (61 aa). Residues threonine 27, threonine 47, and threonine 53 each carry the phosphothreonine modification. Serine 54 is subject to Phosphoserine. Residues 75-95 traverse the membrane as a helical; Anchor for type IV membrane protein segment; that stretch reads MIVIICVIVLIILILIILFAT. Topologically, residues 96-100 are vesicular; sequence GTIPT.

Belongs to the synaptobrevin family. Forms a SNARE complex composed of VAMP8, SNAP29 and STX17 involved in fusion of autophagosome with lysosome. Found in a number of SNARE complexes with NAPA, SNAP23, SNAP25, STX1A, STX4, STX7, STX8 and VTI1B. Interacts with PICALM. SNARE complex formation and binding by PICALM are mutually exclusive processes for VAMP8. Interacts with SBF2/MTMR13. Interacts with RAB21 (in GTP-bound form) in response to starvation; the interaction probably regulates VAMP8 endolysosomal trafficking. Interacts with STX17; this interaction is increased in the absence of TMEM39A. Interacts with TRIM6. Expressed (at protein level) at a high level in kidney, lung and spleen; at a lower level in testis, liver, brain and heart. Expressed in kidney and retinal pigment epithelium derived cell line.

The protein resides in the lysosome membrane. Its subcellular location is the late endosome membrane. It localises to the early endosome membrane. The protein localises to the midbody. It is found in the cell membrane. The protein resides in the zymogen granule membrane. In terms of biological role, SNAREs, soluble N-ethylmaleimide-sensitive factor-attachment protein receptors, are essential proteins for fusion of cellular membranes. SNAREs localized on opposing membranes assemble to form a trans-SNARE complex, an extended, parallel four alpha-helical bundle that drives membrane fusion. VAMP8 is a SNARE involved in autophagy through the direct control of autophagosome membrane fusion with the lysososome membrane via its interaction with the STX17-SNAP29 binary t-SNARE complex. Also required for dense-granule secretion in platelets. Also plays a role in regulated enzyme secretion in pancreatic acinar cells. Involved in the abscission of the midbody during cell division, which leads to completely separate daughter cells. Involved in the homotypic fusion of early and late endosomes. Also participates in the activation of type I interferon antiviral response through a TRIM6-dependent mechanism. The polypeptide is Vesicle-associated membrane protein 8 (Rattus norvegicus (Rat)).